We begin with the raw amino-acid sequence, 83 residues long: Protein L83L (83 aa).

The protein belongs to the asfivirus L83L family. In terms of assembly, interacts with host IL1B.

It localises to the host cytoplasm. Functionally, may subvert the host innate immune response by interacting with host IL1B and interfering with its function. This Ornithodoros (relapsing fever ticks) protein is Protein L83L.